Here is an 819-residue protein sequence, read N- to C-terminus: Cadherin-24 (819 aa).

The first 19 residues, 1-19, serve as a signal peptide directing secretion; it reads MWGLVRLLLAWLGGWGCMG. Positions 21-44 are excised as a propeptide; the sequence is LAAPARAWAGSREHPGPALLRTRR. At 45 to 641 the chain is on the extracellular side; that stretch reads SWVWNQFFVI…LSAAGLSTGA (597 aa). 5 consecutive Cadherin domains span residues 46–150, 151–259, 260–374, 375–517, and 517–630; these read WVWN…PPIF, PLGP…PPKF, PQSL…PPAF, TQAA…APQL, and LAEP…WPEA. Residues Asn-446, Asn-548, and Asn-563 are each glycosylated (N-linked (GlcNAc...) asparagine). The chain crosses the membrane as a helical span at residues 642–662; sequence LLAIITCVGALLALVVLFVAL. Topologically, residues 663–819 are cytoplasmic; sequence RRQKQEALMV…LYGAKEPPAP (157 aa). The segment at 768-800 is disordered; sequence YEGRGSSCGSLSSLGSGSEAGGAPGPAEPLDDW. A compositionally biased stretch (low complexity) spans 771–784; sequence RGSSCGSLSSLGSG.

As to quaternary structure, associates with alpha-, beta- and delta-catenins.

It localises to the cell membrane. Cadherins are calcium-dependent cell adhesion proteins. They preferentially interact with themselves in a homophilic manner in connecting cells; cadherins may thus contribute to the sorting of heterogeneous cell types. Cadherin-24 mediate strong cell-cell adhesion. The chain is Cadherin-24 (CDH24) from Homo sapiens (Human).